A 1435-amino-acid chain; its full sequence is Trafficking protein particle complex subunit 8 (1435 aa).

3 positions are modified to phosphoserine: serine 273, serine 279, and serine 309. The interval 301 to 321 (QLEQSSDPSNSIDGPDHLRSA) is disordered. Over residues 302 to 312 (LEQSSDPSNSI) the composition is skewed to polar residues.

Belongs to the TRS85 family. As to quaternary structure, component of the multisubunit TRAPP (transport protein particle) complex, which includes TRAPPC2, TRAPPC2L, TRAPPC3, TRAPPC3L, TRAPPC4, TRAPPC5, TRAPPC8, TRAPPC9, TRAPPC10, TRAPPC11 and TRAPPC12. Interacts with TBC1D14. Interacts (via C-terminus) with TMEM131 (via C-terminus); the interaction is direct and is involved in collagen secretion.

Its subcellular location is the golgi apparatus. It is found in the cis-Golgi network. Its function is as follows. Plays a role in endoplasmic reticulum to Golgi apparatus trafficking at a very early stage. Maintains together with TBC1D14 the cycling pool of ATG9 required for initiation of autophagy. Involved in collagen secretion. In Homo sapiens (Human), this protein is Trafficking protein particle complex subunit 8 (TRAPPC8).